The chain runs to 188 residues: Peptidyl-tRNA hydrolase (188 aa).

TRNA is bound at residue Y14. H19 (proton acceptor) is an active-site residue. Positions 64, 66, and 113 each coordinate tRNA.

Belongs to the PTH family. In terms of assembly, monomer.

It localises to the cytoplasm. It carries out the reaction an N-acyl-L-alpha-aminoacyl-tRNA + H2O = an N-acyl-L-amino acid + a tRNA + H(+). Its function is as follows. Hydrolyzes ribosome-free peptidyl-tRNAs (with 1 or more amino acids incorporated), which drop off the ribosome during protein synthesis, or as a result of ribosome stalling. Catalyzes the release of premature peptidyl moieties from peptidyl-tRNA molecules trapped in stalled 50S ribosomal subunits, and thus maintains levels of free tRNAs and 50S ribosomes. The sequence is that of Peptidyl-tRNA hydrolase from Chloroflexus aurantiacus (strain ATCC 29364 / DSM 637 / Y-400-fl).